A 295-amino-acid polypeptide reads, in one-letter code: Glycine--tRNA ligase alpha subunit (295 aa).

This sequence belongs to the class-II aminoacyl-tRNA synthetase family. In terms of assembly, tetramer of two alpha and two beta subunits.

It is found in the cytoplasm. It catalyses the reaction tRNA(Gly) + glycine + ATP = glycyl-tRNA(Gly) + AMP + diphosphate. This is Glycine--tRNA ligase alpha subunit from Bacillus licheniformis (strain ATCC 14580 / DSM 13 / JCM 2505 / CCUG 7422 / NBRC 12200 / NCIMB 9375 / NCTC 10341 / NRRL NRS-1264 / Gibson 46).